Reading from the N-terminus, the 398-residue chain is Cathepsin D (398 aa).

A signal peptide spans 1–20; it reads MAPRGLLVLLLLALVGPCAA. Residues 21 to 63 constitute a propeptide, activation peptide; sequence LIRIPLTKFTSTRRMLTEVGSEIPDMNAITQFLKFKLGFADLA. A Peptidase A1 domain is found at 78-395; it reads YYGEIGIGTP…DRDNDSVGFA (318 aa). Asp-96 is an active-site residue. A disulfide bridge links Cys-109 with Cys-116. 2 N-linked (GlcNAc...) asparagine glycosylation sites follow: Asn-133 and Asn-251. Cysteines 274 and 278 form a disulfide. Asp-283 is a catalytic residue. A disulfide bond links Cys-317 and Cys-354.

It belongs to the peptidase A1 family. As to quaternary structure, consists of a light chain and a heavy chain. In terms of tissue distribution, oocytic yolk, preovulatory follicles, liver.

The protein resides in the lysosome. The catalysed reaction is Specificity similar to, but narrower than, that of pepsin A. Does not cleave the 4-Gln-|-His-5 bond in B chain of insulin.. In terms of biological role, acid protease active in intracellular protein breakdown. In chicken it is a key enzyme for yolk formation as it is capable of catalyzing intra oocytic break down of protein components of both vitellogenin and VLDL. This chain is Cathepsin D (CTSD), found in Gallus gallus (Chicken).